A 146-amino-acid polypeptide reads, in one-letter code: Putative serine protease inhibitor SAV_2156 (146 aa).

A signal peptide spans 1 to 26 (MTKTTMAVPGALLAAIALLSAAPAQA). Intrachain disulfides connect cysteine 57/cysteine 70 and cysteine 90/cysteine 120.

It belongs to the protease inhibitor I16 (SSI) family.

The protein resides in the secreted. This Streptomyces avermitilis (strain ATCC 31267 / DSM 46492 / JCM 5070 / NBRC 14893 / NCIMB 12804 / NRRL 8165 / MA-4680) protein is Putative serine protease inhibitor SAV_2156.